We begin with the raw amino-acid sequence, 393 residues long: MPSRATVQEFSDSYPFCHNGFRPIMMPKIVSVQHSTRRHLTSFVGRKAELNDVRRLLSDKRLVTLTGPDGMGKSRLALQIGAQIAHEFTYGRWDCDLATVTDRDCVSISMLNALGLPVQPGLSAIDTLVGVINDARVLLVLDHCEHLLDACAAIIDSLLRSCPRLTILTTSTEAIGLAGELTWRVPPLSLTNDAIELFVDRARRVRSDFAINADTAVTVGEICRRLDGVPLAIELAAARTDTLSPVEILAGLNDRFRLVAGAAGNAVRPEQTLCATVQWSHALLSGPERALLHRLAVFAGGFDLDGAQAVGANDEDFEGYQTLGRFAELVDKAFVVVENNRGRAGYRLLYSVRQYALEKLSESGEADAVLARYRKHLKQPNQVVRAGSGGVRY.

Residue 67–74 (GPDGMGKS) coordinates ATP.

This is an uncharacterized protein from Mycobacterium tuberculosis (strain CDC 1551 / Oshkosh).